We begin with the raw amino-acid sequence, 681 residues long: Chaperone protein HtpG (681 aa).

The a; substrate-binding stretch occupies residues 1–326; that stretch reads MQKGNIGVTT…SPDIPLNVSR (326 aa). Residues 327–545 form a b region; sequence SYLQSDSNVK…YMRRMKEMAN (219 aa). Positions 546 to 681 are c; sequence IQAGMSFYGE…NFVKRSIELI (136 aa). Positions 589–620 are disordered; that stretch reads IQTEMNSVSKRRNELKDSQKDKKEEDIPTAEK. Over residues 599–620 the composition is skewed to basic and acidic residues; it reads RRNELKDSQKDKKEEDIPTAEK.

The protein belongs to the heat shock protein 90 family. Homodimer.

It localises to the cytoplasm. Functionally, molecular chaperone. Has ATPase activity. The sequence is that of Chaperone protein HtpG from Bacteroides thetaiotaomicron (strain ATCC 29148 / DSM 2079 / JCM 5827 / CCUG 10774 / NCTC 10582 / VPI-5482 / E50).